The sequence spans 299 residues: Small ribosomal subunit biogenesis GTPase RsgA (299 aa).

Residues 64-225 (KNEMIRPPVA…VGDTPGFSSL (162 aa)) form the CP-type G domain. Residues 113-116 (TKTD) and 168-176 (GQTGAGKST) contribute to the GTP site. Residues cysteine 249, cysteine 254, histidine 256, and cysteine 262 each coordinate Zn(2+).

This sequence belongs to the TRAFAC class YlqF/YawG GTPase family. RsgA subfamily. Monomer. Associates with 30S ribosomal subunit, binds 16S rRNA. Requires Zn(2+) as cofactor.

The protein localises to the cytoplasm. In terms of biological role, one of several proteins that assist in the late maturation steps of the functional core of the 30S ribosomal subunit. Helps release RbfA from mature subunits. May play a role in the assembly of ribosomal proteins into the subunit. Circularly permuted GTPase that catalyzes slow GTP hydrolysis, GTPase activity is stimulated by the 30S ribosomal subunit. The polypeptide is Small ribosomal subunit biogenesis GTPase RsgA (Latilactobacillus sakei subsp. sakei (strain 23K) (Lactobacillus sakei subsp. sakei)).